A 363-amino-acid polypeptide reads, in one-letter code: Holliday junction branch migration complex subunit RuvB (363 aa).

A disordered region spans residues 1–32; it reads MSDVERTEFEIPGGIPPRRNGGQGRAADTNVD. The interval 27–207 is large ATPase domain (RuvB-L); it reads ADTNVDANLK…FGFTAQMEFY (181 aa). ATP-binding positions include L46, R47, G88, K91, T92, T93, 154–156, R197, Y207, and R244; that span reads EDF. Position 92 (T92) interacts with Mg(2+). A small ATPAse domain (RuvB-S) region spans residues 208 to 278; the sequence is DVPDLTKVVK…AANAALIVFD (71 aa). A head domain (RuvB-H) region spans residues 281 to 363; that stretch reads EVGLDRLDRA…EPPEGTIGDY (83 aa). The DNA site is built by R336 and R341.

Belongs to the RuvB family. As to quaternary structure, homohexamer. Forms an RuvA(8)-RuvB(12)-Holliday junction (HJ) complex. HJ DNA is sandwiched between 2 RuvA tetramers; dsDNA enters through RuvA and exits via RuvB. An RuvB hexamer assembles on each DNA strand where it exits the tetramer. Each RuvB hexamer is contacted by two RuvA subunits (via domain III) on 2 adjacent RuvB subunits; this complex drives branch migration. In the full resolvosome a probable DNA-RuvA(4)-RuvB(12)-RuvC(2) complex forms which resolves the HJ.

Its subcellular location is the cytoplasm. It catalyses the reaction ATP + H2O = ADP + phosphate + H(+). Functionally, the RuvA-RuvB-RuvC complex processes Holliday junction (HJ) DNA during genetic recombination and DNA repair, while the RuvA-RuvB complex plays an important role in the rescue of blocked DNA replication forks via replication fork reversal (RFR). RuvA specifically binds to HJ cruciform DNA, conferring on it an open structure. The RuvB hexamer acts as an ATP-dependent pump, pulling dsDNA into and through the RuvAB complex. RuvB forms 2 homohexamers on either side of HJ DNA bound by 1 or 2 RuvA tetramers; 4 subunits per hexamer contact DNA at a time. Coordinated motions by a converter formed by DNA-disengaged RuvB subunits stimulates ATP hydrolysis and nucleotide exchange. Immobilization of the converter enables RuvB to convert the ATP-contained energy into a lever motion, pulling 2 nucleotides of DNA out of the RuvA tetramer per ATP hydrolyzed, thus driving DNA branch migration. The RuvB motors rotate together with the DNA substrate, which together with the progressing nucleotide cycle form the mechanistic basis for DNA recombination by continuous HJ branch migration. Branch migration allows RuvC to scan DNA until it finds its consensus sequence, where it cleaves and resolves cruciform DNA. In Corynebacterium glutamicum (strain R), this protein is Holliday junction branch migration complex subunit RuvB.